Consider the following 442-residue polypeptide: Citrate synthase (442 aa).

Catalysis depends on residues His-274, His-320, and Asp-375.

It belongs to the citrate synthase family.

It catalyses the reaction oxaloacetate + acetyl-CoA + H2O = citrate + CoA + H(+). It functions in the pathway carbohydrate metabolism; tricarboxylic acid cycle; isocitrate from oxaloacetate: step 1/2. Catalyzes both citrate generation and citrate cleavage. Part of a reversible tricarboxylic acid (TCA) cycle that can fix carbon dioxide autotrophically and may represent an ancestral mode of the conventional reductive TCA (rTCA) cycle. The direction is controlled by the available carbon source(s). The chain is Citrate synthase from Thermosulfidibacter takaii (strain DSM 17441 / JCM 13301 / NBRC 103674 / ABI70S6).